The sequence spans 2776 residues: Microtubule-associated protein 1A (2776 aa).

Residues serine 114, serine 117, serine 118, serine 121, and serine 155 each carry the phosphoserine modification. Position 177 is a phosphotyrosine (tyrosine 177). The interval proline 310–methionine 331 is disordered. Phosphoserine occurs at positions 319 and 322. Repeat 1 spans residues lysine 336 to glutamate 338. An 11 X 3 AA approximate repeats of K-K-[DE] region spans residues lysine 336–glutamate 541. The span at alanine 345–alanine 390 shows a compositional bias: basic and acidic residues. Disordered regions lie at residues alanine 345–serine 678, threonine 738–threonine 809, glutamate 846–glutamine 1076, glutamate 1094–glycine 1210, glutamate 1223–glutamine 1651, aspartate 1685–phenylalanine 1729, leucine 1744–serine 1848, and alanine 1866–lysine 2648. The residue at position 384 (serine 384) is a Phosphoserine. Over residues glutamate 391–lysine 406 the composition is skewed to basic residues. Basic and acidic residues-rich tracts occupy residues glutamate 407–leucine 464 and leucine 484–serine 500. Tandem repeats lie at residues lysine 415–aspartate 417, lysine 420–glutamate 422, lysine 424–glutamate 426, arginine 427–glutamate 429, lysine 431–glutamate 433, arginine 436–glutamate 438, lysine 440–aspartate 442, lysine 444–aspartate 446, and arginine 449–aspartate 451. Phosphothreonine is present on threonine 504. Serine 526 and serine 527 each carry phosphoserine. Basic and acidic residues predominate over residues glutamate 536–glutamate 556. The stretch at lysine 539–glutamate 541 is repeat 11. A compositionally biased stretch (polar residues) spans glycine 567 to proline 579. Over residues glutamine 587–glutamate 631 the composition is skewed to basic and acidic residues. A phosphoserine mark is found at serine 604 and serine 611. At threonine 633 the chain carries Phosphothreonine. Residues alanine 640–serine 667 are compositionally biased toward basic and acidic residues. Phosphoserine is present on residues serine 644, serine 667, serine 678, and serine 786. 3 stretches are compositionally biased toward polar residues: residues alanine 785–threonine 800, glutamate 846–glutamate 859, and threonine 870–threonine 882. A phosphoserine mark is found at serine 873, serine 876, serine 877, and serine 890. Threonine 893 carries the phosphothreonine modification. A phosphoserine mark is found at serine 895, serine 899, and serine 908. Over residues valine 944 to tyrosine 954 the composition is skewed to polar residues. Phosphoserine is present on residues serine 981, serine 991, serine 999, serine 1008, serine 1014, serine 1023, and serine 1062. Phosphothreonine is present on threonine 1068. The span at glycine 1096–glycine 1105 shows a compositional bias: low complexity. Residues arginine 1112 to leucine 1124 show a composition bias toward basic and acidic residues. 10 positions are modified to phosphoserine: serine 1131, serine 1133, serine 1147, serine 1159, serine 1177, serine 1187, serine 1190, serine 1196, serine 1205, and serine 1208. Residues glutamate 1179 to glutamate 1189 are compositionally biased toward polar residues. Positions leucine 1197–glycine 1210 are enriched in polar residues. The span at glutamate 1223 to serine 1234 shows a compositional bias: basic and acidic residues. Serine 1251, serine 1289, serine 1310, serine 1313, and serine 1316 each carry phosphoserine. The segment covering threonine 1302–proline 1317 has biased composition (low complexity). Composition is skewed to basic and acidic residues over residues glycine 1332–glutamate 1350, serine 1370–lysine 1384, lysine 1391–glutamate 1435, proline 1449–glutamate 1488, arginine 1499–asparagine 1541, and glycine 1549–arginine 1599. Serine 1516, serine 1580, and serine 1606 each carry phosphoserine. Residues glutamate 1609 to aspartate 1625 are compositionally biased toward basic and acidic residues. Phosphoserine is present on residues serine 1634 and serine 1648. The span at glutamine 1709 to proline 1718 shows a compositional bias: polar residues. Serine 1720, serine 1747, serine 1762, serine 1768, and serine 1772 each carry phosphoserine. Threonine 1777 carries the phosphothreonine modification. Residues serine 1783 and serine 1789 each carry the phosphoserine modification. The segment covering threonine 1794–serine 1808 has biased composition (polar residues). A compositionally biased stretch (pro residues) spans leucine 1823–proline 1844. Residues lysine 1878–glutamate 1890 are compositionally biased toward basic and acidic residues. Serine 1902 carries the phosphoserine modification. Composition is skewed to basic and acidic residues over residues glutamate 1907–serine 1935 and serine 1972–leucine 1988. Threonine 1928 carries the phosphothreonine modification. A compositionally biased stretch (polar residues) spans serine 1990–tyrosine 2006. Residue serine 1993 is modified to Phosphoserine. The segment covering threonine 2013 to alanine 2039 has biased composition (pro residues). Phosphothreonine is present on threonine 2031. Residues serine 2042–cysteine 2058 are compositionally biased toward polar residues. Residues serine 2048 and serine 2082 each carry the phosphoserine modification. Residues proline 2060–threonine 2096 show a composition bias toward basic and acidic residues. The span at proline 2149–alanine 2158 shows a compositional bias: pro residues. Phosphoserine occurs at positions 2209, 2226, 2230, 2233, and 2234. The span at glutamate 2231 to isoleucine 2242 shows a compositional bias: polar residues. The span at proline 2279–proline 2292 shows a compositional bias: low complexity. Over residues alanine 2355 to glutamate 2367 the composition is skewed to basic and acidic residues. Serine 2425 bears the Phosphoserine mark. Residues serine 2478–aspartate 2490 are compositionally biased toward low complexity. Residues aspartate 2535–proline 2551 show a composition bias toward pro residues. Residues glycine 2566–glutamine 2576 are compositionally biased toward basic and acidic residues. Phosphoserine is present on residues serine 2623 and serine 2637.

It belongs to the MAP1 family. As to quaternary structure, 3 different light chains, LC1 (a cleavage product of MAP1B), LC2 (a cleavage product of MAP1A) and LC3 (produced by one of the MAP1LC3 genes), can associate with the MAP1A or MAP1B heavy chains. Interacts with guanylate kinase-like domain of DLG1, DLG2 and DLG4. Binds to CSNK1D. Interacts with TIAM2. In terms of assembly, interacts with ELAVL4. Post-translationally, phosphorylated by CSNK1D. In terms of processing, LC2 is generated from MAP1A by proteolytic processing. It is free to associate with both MAP1A and MAP1B. In terms of tissue distribution, both isoforms highly expressed in brain, and to a lesser extent in embryo. Isoform 1 is also expressed at a low level in other tissues including heart and muscle.

The protein resides in the cytoplasm. It is found in the cytoskeleton. Structural protein involved in the filamentous cross-bridging between microtubules and other skeletal elements. The sequence is that of Microtubule-associated protein 1A (Map1a) from Mus musculus (Mouse).